A 432-amino-acid chain; its full sequence is MVPERAVILAAGLGTRMGRKPKGLVRVAGREILYRTIRLLQENGVKKFIVVTNERYAPLYQEFIERHGFDAEIIINPEPEKGNGHSLHLAKEKVSGKFALTMSDHVYSRDFIERAVRGRGLIADREPRWVDIGEATKVQVKDEKVWKIGKRLKEWDAIDTGFFVLDDEIFKVTEILENEKNGDYSLSEVMERAKVSVTFVDGLGWTDVDTPEEIKRARRMLVRTAVKGTGDGFVSRHLNRRISTRVSELLVEKVTPNQMTVVTFLLGIISALTTLVSLPLAGILYQLSSILDGIDGELARAQLRTSKLGGYVDSILDRYVDGSFLALLAYATINEPIWYFVALLALLGSVMVSYSTERFRGAFCRDAYKEVPALRKLPGKRDERVFLTMLFLLYQIAASIKALFLTLAVLTNFRVALTLYFVVKKVSHPKTI.

The interval 3–225 (PERAVILAAG…RARRMLVRTA (223 aa)) is mobA-like NTP transferase. Residues 9–11 (LAA), Lys22, and Glu113 each bind CTP. Mg(2+) is bound at residue Glu113. The tract at residues 226 to 426 (VKGTGDGFVS…LTLYFVVKKV (201 aa)) is CDP-alcohol phosphatidyltransferases. Helical transmembrane passes span 264-284 (FLLGIISALTTLVSLPLAGIL), 337-356 (IWYFVALLALLGSVMVSYST), and 385-405 (VFLTMLFLLYQIAASIKALFL).

In the N-terminal section; belongs to the MobA family. This sequence in the C-terminal section; belongs to the CDP-alcohol phosphatidyltransferase class-I family. Requires Mg(2+) as cofactor.

The protein localises to the membrane. It catalyses the reaction 1D-myo-inositol 3-phosphate + CTP + H(+) = CDP-1L-myo-inositol + diphosphate. The enzyme catalyses CDP-1L-myo-inositol + 1D-myo-inositol 3-phosphate = bis(1L-myo-inositol) 3,1'-phosphate 1-phosphate + CMP + H(+). In terms of biological role, involved in biosynthesis of di-myo-inositol phosphate (DIP), a widespread organic solute in microorganisms adapted to hot environments. Catalyzes the condensation of CTP and L-myo-inositol-1-phosphate into CDP-L-myo-inositol, as well as the biosynthesis of di-myo-inositol-1,3'-phosphate-1'-phosphate (DIPP) from CDP-L-myo-inositol and L-myo-inositol-1-phosphate. This chain is Bifunctional IPC transferase and DIPP synthase, found in Thermococcus kodakarensis (strain ATCC BAA-918 / JCM 12380 / KOD1) (Pyrococcus kodakaraensis (strain KOD1)).